The sequence spans 425 residues: Enolase (425 aa).

Gln-162 lines the (2R)-2-phosphoglycerate pocket. Glu-204 (proton donor) is an active-site residue. Mg(2+) is bound by residues Asp-241, Glu-288, and Asp-315. Residues Lys-340, Arg-369, Ser-370, and Lys-391 each contribute to the (2R)-2-phosphoglycerate site. Residue Lys-340 is the Proton acceptor of the active site.

Belongs to the enolase family. It depends on Mg(2+) as a cofactor.

The protein resides in the cytoplasm. The protein localises to the secreted. It localises to the cell surface. The enzyme catalyses (2R)-2-phosphoglycerate = phosphoenolpyruvate + H2O. The protein operates within carbohydrate degradation; glycolysis; pyruvate from D-glyceraldehyde 3-phosphate: step 4/5. Its function is as follows. Catalyzes the reversible conversion of 2-phosphoglycerate (2-PG) into phosphoenolpyruvate (PEP). It is essential for the degradation of carbohydrates via glycolysis. The polypeptide is Enolase (Porphyromonas gingivalis (strain ATCC 33277 / DSM 20709 / CIP 103683 / JCM 12257 / NCTC 11834 / 2561)).